The sequence spans 103 residues: Co-chaperonin GroES (103 aa).

This sequence belongs to the GroES chaperonin family. As to quaternary structure, heptamer of 7 subunits arranged in a ring. Interacts with the chaperonin GroEL.

Its subcellular location is the cytoplasm. Together with the chaperonin GroEL, plays an essential role in assisting protein folding. The GroEL-GroES system forms a nano-cage that allows encapsulation of the non-native substrate proteins and provides a physical environment optimized to promote and accelerate protein folding. GroES binds to the apical surface of the GroEL ring, thereby capping the opening of the GroEL channel. This chain is Co-chaperonin GroES, found in Prochlorococcus marinus (strain SARG / CCMP1375 / SS120).